The following is a 325-amino-acid chain: Aerobic respiration control sensor protein ArcB homolog (325 aa).

The Cytoplasmic portion of the chain corresponds to 1-26 (MKNFKYFAQSYVDWVIRLGRLRFSLL). A helical transmembrane segment spans residues 27–47 (GVMILAVLALCTQILFSLFIV). The Periplasmic portion of the chain corresponds to 48–57 (HQISWVDIFR). Residues 58 to 78 (SVTFGLLTAPFVIYFFTLLVE) traverse the membrane as a helical segment. Topologically, residues 79–325 (KLEHSRLDLS…AQLMGRGFNS (247 aa)) are cytoplasmic. The 198-residue stretch at 128–325 (TISHEFRTPL…AQLMGRGFNS (198 aa)) folds into the Histidine kinase domain. At His-131 the chain carries Phosphohistidine; by autocatalysis.

It is found in the cell inner membrane. The enzyme catalyses ATP + protein L-histidine = ADP + protein N-phospho-L-histidine.. Member of the two-component regulatory system ArcB/ArcA. Activates ArcA by phosphorylation. The chain is Aerobic respiration control sensor protein ArcB homolog (arcB) from Haemophilus influenzae (strain ATCC 51907 / DSM 11121 / KW20 / Rd).